A 1123-amino-acid chain; its full sequence is Translation initiation factor IF-2 (1123 aa).

Disordered stretches follow at residues 52–452 (LLKA…KVHI) and 480–512 (LARP…RQRQ). 3 stretches are compositionally biased toward low complexity: residues 54–73 (KAGS…PGKA), 94–113 (KPAA…AKSP), and 121–133 (AAPS…KASA). The span at 170–187 (PPSPPARPVPQQPSPPSA) shows a compositional bias: pro residues. Residues 193–206 (APIRRAAPNDAPRP) are compositionally biased toward low complexity. Composition is skewed to pro residues over residues 207–217 (ANAPPSRPQPK) and 258–268 (SPRPAVSPRPS). The segment covering 285–304 (RPGAPTRPGTGAGRPSRPGG) has biased composition (low complexity). The segment covering 320–339 (GNRGEGGRPPGGARPAGGGN) has biased composition (gly residues). Pro residues predominate over residues 388–403 (ATPPVSRPTATPPSPA). Residues 412-422 (FRPGAGPGGQR) show a composition bias toward gly residues. Residues 425 to 439 (GRPDWDDSAKLDALR) are compositionally biased toward basic and acidic residues. The span at 486-499 (PKSQQKAAPKPVAA) shows a compositional bias: low complexity. Basic residues predominate over residues 500 to 512 (MRKRRKETTRQRQ). The 173-residue stretch at 615–787 (RRPPVVTVMG…LLLVTEVEDL (173 aa)) folds into the tr-type G domain. Residues 624-631 (GHVDHGKT) are G1. 624–631 (GHVDHGKT) provides a ligand contact to GTP. The G2 stretch occupies residues 649 to 653 (GITQH). A G3 region spans residues 674–677 (DTPG). GTP contacts are provided by residues 674-678 (DTPGH) and 728-731 (NKID). The interval 728–731 (NKID) is G4. The tract at residues 764 to 766 (SAI) is G5.

This sequence belongs to the TRAFAC class translation factor GTPase superfamily. Classic translation factor GTPase family. IF-2 subfamily.

The protein resides in the cytoplasm. One of the essential components for the initiation of protein synthesis. Protects formylmethionyl-tRNA from spontaneous hydrolysis and promotes its binding to the 30S ribosomal subunits. Also involved in the hydrolysis of GTP during the formation of the 70S ribosomal complex. The protein is Translation initiation factor IF-2 of Synechococcus sp. (strain WH7803).